The following is a 488-amino-acid chain: Protein nucleotidyltransferase YdiU (488 aa).

Gly-91, Gly-93, Arg-94, Lys-114, Asp-126, Gly-127, Arg-177, and Arg-184 together coordinate ATP. Residue Asp-253 is the Proton acceptor of the active site. Residues Asn-254 and Asp-263 each contribute to the Mg(2+) site. Asp-263 is an ATP binding site.

This sequence belongs to the SELO family. It depends on Mg(2+) as a cofactor. The cofactor is Mn(2+).

It carries out the reaction L-seryl-[protein] + ATP = 3-O-(5'-adenylyl)-L-seryl-[protein] + diphosphate. The enzyme catalyses L-threonyl-[protein] + ATP = 3-O-(5'-adenylyl)-L-threonyl-[protein] + diphosphate. It catalyses the reaction L-tyrosyl-[protein] + ATP = O-(5'-adenylyl)-L-tyrosyl-[protein] + diphosphate. The catalysed reaction is L-histidyl-[protein] + UTP = N(tele)-(5'-uridylyl)-L-histidyl-[protein] + diphosphate. It carries out the reaction L-seryl-[protein] + UTP = O-(5'-uridylyl)-L-seryl-[protein] + diphosphate. The enzyme catalyses L-tyrosyl-[protein] + UTP = O-(5'-uridylyl)-L-tyrosyl-[protein] + diphosphate. Nucleotidyltransferase involved in the post-translational modification of proteins. It can catalyze the addition of adenosine monophosphate (AMP) or uridine monophosphate (UMP) to a protein, resulting in modifications known as AMPylation and UMPylation. The sequence is that of Protein nucleotidyltransferase YdiU from Bacillus cereus (strain ZK / E33L).